The chain runs to 189 residues: Elongation factor P (189 aa).

Lys34 is modified (N6-(3,6-diaminohexanoyl)-5-hydroxylysine).

This sequence belongs to the elongation factor P family. In terms of processing, may be beta-lysylated on the epsilon-amino group of Lys-34 by the combined action of EpmA and EpmB, and then hydroxylated on the C5 position of the same residue by EpmC (if this protein is present). Lysylation is critical for the stimulatory effect of EF-P on peptide-bond formation. The lysylation moiety may extend toward the peptidyltransferase center and stabilize the terminal 3-CCA end of the tRNA. Hydroxylation of the C5 position on Lys-34 may allow additional potential stabilizing hydrogen-bond interactions with the P-tRNA.

Its subcellular location is the cytoplasm. It functions in the pathway protein biosynthesis; polypeptide chain elongation. In terms of biological role, involved in peptide bond synthesis. Alleviates ribosome stalling that occurs when 3 or more consecutive Pro residues or the sequence PPG is present in a protein, possibly by augmenting the peptidyl transferase activity of the ribosome. Modification of Lys-34 is required for alleviation. The sequence is that of Elongation factor P from Teredinibacter turnerae (strain ATCC 39867 / T7901).